Reading from the N-terminus, the 315-residue chain is Glycine--tRNA ligase alpha subunit (315 aa).

Belongs to the class-II aminoacyl-tRNA synthetase family. As to quaternary structure, tetramer of two alpha and two beta subunits.

It is found in the cytoplasm. It catalyses the reaction tRNA(Gly) + glycine + ATP = glycyl-tRNA(Gly) + AMP + diphosphate. The sequence is that of Glycine--tRNA ligase alpha subunit from Pseudomonas putida (strain W619).